Consider the following 393-residue polypeptide: Decapping nuclease dom-3 (393 aa).

Positions 1-37 are disordered; that stretch reads MSHYGGNPRGNSSHQFGRKDFQQSDSKHIPKITGQPL. Positions 17 to 28 are enriched in basic and acidic residues; that stretch reads GRKDFQQSDSKH. Substrate is bound by residues Arg74, Glu113, and 144–146; that span reads WRG. 5 residues coordinate Mg(2+): Glu205, Glu257, Asp259, Glu269, and Leu270. Glu257 serves as a coordination point for substrate. Positions 271 and 293 each coordinate substrate.

This sequence belongs to the DXO/Dom3Z family. The cofactor is Mg(2+).

The enzyme catalyses a 5'-end NAD(+)-phospho-ribonucleoside in mRNA + H2O = a 5'-end phospho-ribonucleoside in mRNA + NAD(+) + H(+). It catalyses the reaction a 5'-end (N(7)-methyl 5'-triphosphoguanosine)-ribonucleoside-ribonucleotide in mRNA + H2O = a (N(7)-methyl 5'-triphosphoguanosine)-nucleoside + a 5'-end phospho-ribonucleoside in mRNA + H(+). The catalysed reaction is a 5'-end triphospho-ribonucleoside in mRNA + H2O = a 5'-end phospho-ribonucleoside in mRNA + diphosphate + H(+). Its function is as follows. Decapping enzyme for NAD-capped RNAs: specifically hydrolyzes the nicotinamide adenine dinucleotide (NAD) cap from a subset of RNAs by removing the entire NAD moiety from the 5'-end of an NAD-capped RNA. The NAD-cap is present at the 5'-end of some RNAs and snoRNAs. In contrast to the canonical 5'-end N7 methylguanosine (m7G) cap, the NAD cap promotes mRNA decay. Also acts as a non-canonical decapping enzyme that removes the entire cap structure of m7G capped or incompletely capped RNAs and mediates their subsequent degradation. Specifically degrades pre-mRNAs with a defective 5'-end m7G cap and is part of a pre-mRNA capping quality control. Also possesses RNA 5'-pyrophosphohydrolase activity by hydrolyzing the 5'-end triphosphate to release pyrophosphates. This Caenorhabditis elegans protein is Decapping nuclease dom-3.